Reading from the N-terminus, the 183-residue chain is Large ribosomal subunit protein uL5 (183 aa).

It belongs to the universal ribosomal protein uL5 family. In terms of assembly, part of the 50S ribosomal subunit; part of the 5S rRNA/L5/L18/L25 subcomplex. Contacts the 5S rRNA and the P site tRNA. Forms a bridge to the 30S subunit in the 70S ribosome.

Its function is as follows. This is one of the proteins that bind and probably mediate the attachment of the 5S RNA into the large ribosomal subunit, where it forms part of the central protuberance. In the 70S ribosome it contacts protein S13 of the 30S subunit (bridge B1b), connecting the 2 subunits; this bridge is implicated in subunit movement. Contacts the P site tRNA; the 5S rRNA and some of its associated proteins might help stabilize positioning of ribosome-bound tRNAs. The polypeptide is Large ribosomal subunit protein uL5 (Pseudothermotoga lettingae (strain ATCC BAA-301 / DSM 14385 / NBRC 107922 / TMO) (Thermotoga lettingae)).